Consider the following 137-residue polypeptide: Probable S-adenosyl-L-methionine-binding protein MTH_1797 (137 aa).

The 130-residue stretch at 8-137 (IRPVGVVRSP…YYEDIDSLGF (130 aa)) folds into the TsaA-like domain. Residues 25–27 (PAQ), 63–64 (HL), R87, L97, and 117–120 (LDGS) contribute to the S-adenosyl-L-methionine site.

Belongs to the tRNA methyltransferase O family.

The polypeptide is Probable S-adenosyl-L-methionine-binding protein MTH_1797 (Methanothermobacter thermautotrophicus (strain ATCC 29096 / DSM 1053 / JCM 10044 / NBRC 100330 / Delta H) (Methanobacterium thermoautotrophicum)).